We begin with the raw amino-acid sequence, 730 residues long: Polyribonucleotide nucleotidyltransferase (730 aa).

2 residues coordinate Mg(2+): Asp-489 and Asp-495. Residues 556 to 615 (PRIEVMKIAVDKIREVIGSGGKVIREIVEKTGAKINIEDDGTIKIASASGDAIKAAINWI) enclose the KH domain. In terms of domain architecture, S1 motif spans 625–693 (GQIYEGTVVK…ERGKTRLSMK (69 aa)). The disordered stretch occupies residues 700 to 730 (GEDLEAKAKAERDAARAAAPAATGDEAGAAE). The span at 703–714 (LEAKAKAERDAA) shows a compositional bias: basic and acidic residues. Low complexity predominate over residues 715-730 (RAAAPAATGDEAGAAE).

It belongs to the polyribonucleotide nucleotidyltransferase family. It depends on Mg(2+) as a cofactor.

The protein resides in the cytoplasm. The enzyme catalyses RNA(n+1) + phosphate = RNA(n) + a ribonucleoside 5'-diphosphate. Functionally, involved in mRNA degradation. Catalyzes the phosphorolysis of single-stranded polyribonucleotides processively in the 3'- to 5'-direction. This chain is Polyribonucleotide nucleotidyltransferase, found in Xanthobacter autotrophicus (strain ATCC BAA-1158 / Py2).